The primary structure comprises 496 residues: Maturase K (496 aa).

It belongs to the intron maturase 2 family. MatK subfamily.

It localises to the plastid. The protein localises to the chloroplast. Its function is as follows. Usually encoded in the trnK tRNA gene intron. Probably assists in splicing its own and other chloroplast group II introns. The protein is Maturase K of Paeonia lactiflora (Chinese peony).